The sequence spans 364 residues: NF-kappa-B inhibitor epsilon (364 aa).

Residues 1–108 (MSDARKGPDE…GSPLPPAGVL (108 aa)) are disordered. Phosphoserine is present on serine 18. The span at 36 to 48 (PGSGSSQSGCPQP) shows a compositional bias: low complexity. Residues 51-70 (HAPETHKEPEKEDADGERAD) are compositionally biased toward basic and acidic residues. Positions 93 to 104 (PSPPAPGSPLPP) are enriched in pro residues. ANK repeat units lie at residues 122–155 (DGDT…DIQN), 157–186 (LYQT…SRIL), 190–219 (HGDT…EPGR), 233–262 (QGLA…DIDV), 267–296 (SGKT…RVDA), and 300–329 (NGCT…DSLL).

Belongs to the NF-kappa-B inhibitor family. In terms of assembly, interacts with RELA, REL, NFKB1 nuclear factor NF-kappa-B p50 subunit and NFKB2 nuclear factor NF-kappa-B p52 subunit. Interacts with HNRNPA2B1; the interaction may be mediated by the RRM2 domain of HNRNPA2B1, and HNRNPA2B1 may interact simultaneously with FAM76B and either NFKBIA or NFKBIE to form a complex. Serine phosphorylated; followed by proteasome-dependent degradation.

The protein resides in the cytoplasm. In terms of biological role, sequesters NF-kappa-B transcription factor complexes in the cytoplasm, thereby inhibiting their activity. Sequestered complexes include NFKB1/p50-RELA/p65 and NFKB1/p50-REL/c-Rel complexes. Limits B-cell activation in response to pathogens, and also plays an important role in B-cell development. The sequence is that of NF-kappa-B inhibitor epsilon (Nfkbie) from Mus musculus (Mouse).